Reading from the N-terminus, the 805-residue chain is Transducer protein BasT (805 aa).

A run of 2 helical transmembrane segments spans residues 25-45 (FNVL…YIHL) and 296-316 (NLAG…LTVG). HAMP domains lie at 317 to 370 (RRTS…TAAS) and 437 to 490 (ERLE…ATLA). Residues 509–745 (SAAEIRSASD…EVVTMIDEVT (237 aa)) enclose the Methyl-accepting transducer domain. The disordered stretch occupies residues 513–532 (IRSASDQVSESVQDISADAD). The span at 516–526 (ASDQVSESVQD) shows a compositional bias: polar residues. 3 positions are modified to glutamate methyl ester (Glu): Glu-554, Glu-736, and Glu-763. A disordered region spans residues 752-779 (ATESQQVSAAAEEQAASVSEVAGRADDL). Over residues 754–773 (ESQQVSAAAEEQAASVSEVA) the composition is skewed to low complexity.

It belongs to the methyl-accepting chemotaxis (MCP) protein family. As to quaternary structure, interacts with CheA, CheY, CheW1 and CheW2. In terms of processing, methylated by CheR.

It localises to the cell membrane. Its function is as follows. Mediates chemotaxis towards five attractant amino acids (leucine, isoleucine, valine, methionine and cysteine). Probably transduces the signal from the substrate-binding protein BasB to the histidine kinase CheA. This is Transducer protein BasT (basT) from Halobacterium salinarum (strain ATCC 29341 / DSM 671 / R1).